A 345-amino-acid chain; its full sequence is MNPITLAIIYFTIFLGPVITMSSTNLMLMWVGLEFSLLAIIPMLINKKNPRSTEAATKYFVTQATASMIILLAIVLNYKQLGTWMFQQQTNGLILNMTLMALSMKLGLAPFHFWLPEVTQGIPLHMGLILLTWQKIAPLSILIQIYPLLNSTIILMLAITSIFMGAWGGLNQTQMRKIMAYSSIAHMGWMLAILPYNPSLTLLNLMIYIILTAPMFMALMLNNSMTINSISLLWNKTPAMLTMISLMLLSLGGLPPLTGFLPKWIIITELMKNNCLIMATLMAMMALLNLFFYTRLIYSTSLTMFPTNNNSKMMTHQTKTKPNLMFSTLAIMSTMTLPLAPQLIT.

A run of 10 helical transmembrane segments spans residues 1–21, 25–45, 56–76, 92–114, 149–171, 178–198, 200–220, 241–261, 274–294, and 324–344; these read MNPI…VITM, NLML…PMLI, ATKY…AIVL, GLIL…FHFW, LNST…GGLN, IMAY…PYNP, LTLL…MALM, LTMI…TGFL, NCLI…FFYT, and LMFS…PQLI.

The protein belongs to the complex I subunit 2 family. In terms of assembly, core subunit of respiratory chain NADH dehydrogenase (Complex I) which is composed of 45 different subunits. Interacts with TMEM242.

Its subcellular location is the mitochondrion inner membrane. It carries out the reaction a ubiquinone + NADH + 5 H(+)(in) = a ubiquinol + NAD(+) + 4 H(+)(out). Core subunit of the mitochondrial membrane respiratory chain NADH dehydrogenase (Complex I) which catalyzes electron transfer from NADH through the respiratory chain, using ubiquinone as an electron acceptor. Essential for the catalytic activity and assembly of complex I. The sequence is that of NADH-ubiquinone oxidoreductase chain 2 from Mus musculus (Mouse).